The primary structure comprises 228 residues: Putative lipoprotein LprH (228 aa).

An N-terminal signal peptide occupies residues methionine 1–alanine 27. A lipid anchor (N-palmitoyl cysteine) is attached at cysteine 28. A lipid anchor (S-diacylglycerol cysteine) is attached at cysteine 28. A helical membrane pass occupies residues glycine 191–phenylalanine 211.

The protein resides in the cell membrane. The chain is Putative lipoprotein LprH (lprH) from Mycobacterium bovis (strain ATCC BAA-935 / AF2122/97).